We begin with the raw amino-acid sequence, 370 residues long: Protein SHI RELATED SEQUENCE 1 (370 aa).

Residues 1–37 (MAGFFSLDGGGGGGGGGGNNQEDHRSNTNPPPPVSEA) form a disordered region. Residues 8-19 (DGGGGGGGGGGN) are compositionally biased toward gly residues. Residues Cys144, Cys147, Cys155, Cys160, Cys164, and Cys171 each contribute to the Zn(2+) site. Positions 144–171 (CQDCGNQAKKDCSHMRCRTCCKSRGFEC) form a DNA-binding region, zn(2)-C6 fungal-type; degenerate. A Required for homo- and heterodimerization motif is present at residues 271-274 (IGGH).

This sequence belongs to the SHI protein family. As to quaternary structure, forms homodimers and heterodimers with LRP1. Expressed in flowers, seeds and seedlings.

The protein localises to the nucleus. Functionally, transcription activator that binds DNA on 5'-ACTCTAC-3' and promotes auxin homeostasis-regulating gene expression (e.g. YUC genes), as well as genes affecting stamen development, cell expansion and timing of flowering. Synergistically with other SHI-related proteins, regulates gynoecium, stamen and leaf development in a dose-dependent manner, controlling apical-basal patterning. Promotes style and stigma formation, and influences vascular development during gynoecium development. May also have a role in the formation and/or maintenance of the shoot apical meristem (SAM). The protein is Protein SHI RELATED SEQUENCE 1 (SRS1) of Arabidopsis thaliana (Mouse-ear cress).